We begin with the raw amino-acid sequence, 473 residues long: Poly(A) polymerase catalytic subunit (473 aa).

Active-site residues include D193 and D195.

The protein belongs to the poxviridae poly(A) polymerase catalytic subunit family. As to quaternary structure, heterodimer of a large (catalytic) subunit and a small (regulatory) subunit.

It catalyses the reaction RNA(n) + ATP = RNA(n)-3'-adenine ribonucleotide + diphosphate. Polymerase that creates the 3'-poly(A) tail of mRNA's. The protein is Poly(A) polymerase catalytic subunit (PAPL) of Crocodylus johnstoni (Australian freshwater crocodile).